The chain runs to 38 residues: Photosystem I reaction center subunit IX (38 aa).

The chain crosses the membrane as a helical span at residues 6-26 (YLSTAPVVATLWLFLTAGILI).

It belongs to the PsaJ family.

The protein localises to the plastid. The protein resides in the chloroplast thylakoid membrane. Its function is as follows. May help in the organization of the PsaE and PsaF subunits. The sequence is that of Photosystem I reaction center subunit IX from Cyanidioschyzon merolae (strain NIES-3377 / 10D) (Unicellular red alga).